The primary structure comprises 349 residues: KH domain-containing, RNA-binding, signal transduction-associated protein 2 (349 aa).

Positions 65–135 constitute a KH domain; the sequence is LIPVKQYPKF…HLSDELHVLI (71 aa). 2 disordered regions span residues 182–284 and 319–349; these read EDSG…DDQT and PEEW…YGRY. Residues Arg230 and Arg240 each carry the omega-N-methylarginine modification. The span at 340–349 shows a compositional bias: basic and acidic residues; sequence GYREHPYGRY.

This sequence belongs to the KHDRBS family. As to quaternary structure, self-associates to form homooligomers. Interacts with KHDRBS1/SAM68; heterooligomer formation of KHDRBS family proteins may modulate RNA substrate specificity. Interacts with RBMX. Interacts with SAFB, SFRS9 and YTHDC1. Interacts with FYN and PLCG1 (via SH3 domain). Interacts (phosphorylated) with FYN, GRB2, PLCG1 and RASA1 (via SH2 domain). Methylated. Post-translationally, tyrosine phosphorylated by FYN, PTK6 and SRC. Tyrosine phosphorylated by SRC during mitosis. Highly expressed in brain, lung, kidney and small intestine. Weakly expressed in placenta, liver, spleen, thymus, ovary and colon.

The protein resides in the nucleus. Functionally, RNA-binding protein that plays a role in the regulation of alternative splicing and influences mRNA splice site selection and exon inclusion. Binds both poly(A) and poly(U) homopolymers. Phosphorylation by PTK6 inhibits its RNA-binding ability. Induces an increased concentration-dependent incorporation of exon in CD44 pre-mRNA by direct binding to purine-rich exonic enhancer. Can regulate alternative splicing of NRXN1 in the laminin G-like domain 6 containing the evolutionary conserved neurexin alternative spliced segment 4 (AS4) involved in neurexin selective targeting to postsynaptic partners. Regulates cell-type specific alternative splicing of NRXN1 at AS4 and acts synergystically with SAM68 in exon skipping. In contrast acts antagonistically with SAM68 in NRXN3 exon skipping at AS4. Its phosphorylation by FYN inhibits its ability to regulate splice site selection. May function as an adapter protein for Src kinases during mitosis. The protein is KH domain-containing, RNA-binding, signal transduction-associated protein 2 (KHDRBS2) of Homo sapiens (Human).